The sequence spans 1877 residues: Protein TIC 214 (1877 aa).

6 consecutive transmembrane segments (helical) span residues Ile18–Gly38, Phe64–Leu84, Pro87–His107, Leu124–Leu144, Val172–Ile192, and Ile221–Ile241. Disordered regions lie at residues Leu246–Lys313, Asp644–Arg695, and Pro774–Glu795. Acidic residues-rich tracts occupy residues Glu251–Thr268, Gly281–Glu304, and Asp645–Glu659. Residues Thr685–Arg695 are compositionally biased toward basic and acidic residues.

Belongs to the TIC214 family. As to quaternary structure, part of the Tic complex.

The protein resides in the plastid. It localises to the chloroplast inner membrane. Involved in protein precursor import into chloroplasts. May be part of an intermediate translocation complex acting as a protein-conducting channel at the inner envelope. This Chloranthus spicatus (Chulantree) protein is Protein TIC 214.